The chain runs to 331 residues: ADP-L-glycero-D-manno-heptose-6-epimerase (331 aa).

NADP(+)-binding positions include Phe11–Ile12, Asp32–Asn33, Lys39, Lys54, Leu75–Thr79, and Asn92. Catalysis depends on Tyr139, which acts as the Proton acceptor. Lys143 contributes to the NADP(+) binding site. Asn168 is a binding site for substrate. 2 residues coordinate NADP(+): Val169 and Lys177. Residue Lys177 is the Proton acceptor of the active site. Residues Arg179, Gln186, Phe200–His203, His213, and Tyr292 contribute to the substrate site.

It belongs to the NAD(P)-dependent epimerase/dehydratase family. HldD subfamily. As to quaternary structure, homopentamer. It depends on NADP(+) as a cofactor.

It catalyses the reaction ADP-D-glycero-beta-D-manno-heptose = ADP-L-glycero-beta-D-manno-heptose. It participates in nucleotide-sugar biosynthesis; ADP-L-glycero-beta-D-manno-heptose biosynthesis; ADP-L-glycero-beta-D-manno-heptose from D-glycero-beta-D-manno-heptose 7-phosphate: step 4/4. Functionally, catalyzes the interconversion between ADP-D-glycero-beta-D-manno-heptose and ADP-L-glycero-beta-D-manno-heptose via an epimerization at carbon 6 of the heptose. The polypeptide is ADP-L-glycero-D-manno-heptose-6-epimerase (Cupriavidus pinatubonensis (strain JMP 134 / LMG 1197) (Cupriavidus necator (strain JMP 134))).